Here is a 482-residue protein sequence, read N- to C-terminus: C3a anaphylatoxin chemotactic receptor (482 aa).

The Extracellular segment spans residues 1 to 23; that stretch reads MASFSAETNSTDLLSQPWNEPPV. N-linked (GlcNAc...) asparagine glycosylation occurs at asparagine 9. A helical transmembrane segment spans residues 24-46; the sequence is ILSMVILSLTFLLGLPGNGLVLW. The Cytoplasmic portion of the chain corresponds to 47–57; it reads VAGLKMQRTVN. A helical transmembrane segment spans residues 58-80; that stretch reads TVWFLHLTLADLLCCLSLPFSLA. The Extracellular segment spans residues 81 to 96; that stretch reads HLALQGQWPYGRFLCE. Cysteine 95 and cysteine 172 are disulfide-bonded. The chain crosses the membrane as a helical span at residues 97–118; it reads LIPSIIVLNMFASVFLLTAISL. The Cytoplasmic portion of the chain corresponds to 119-139; the sequence is DRCLVVFKPIWCQNHRNVGTA. Residues 140 to 160 traverse the membrane as a helical segment; it reads CSICGCIWVVAFVMCIPVFVY. The Extracellular portion of the chain corresponds to 161–340; sequence REIFTADNHN…TPLVAITITR (180 aa). Tyrosine 174 and tyrosine 184 each carry sulfotyrosine. The N-linked (GlcNAc...) asparagine glycan is linked to asparagine 194. Tyrosine 318 carries the post-translational modification Sulfotyrosine. A helical transmembrane segment spans residues 341 to 360; that stretch reads LVVGFLLPSVIMIACYSFIV. Residues 361-377 lie on the Cytoplasmic side of the membrane; it reads FRMQRGRFAKSQSKTFR. The helical transmembrane segment at 378–400 threads the bilayer; that stretch reads VAVVVVAVFLVCWTPYHIFGVLS. At 401 to 417 the chain is on the extracellular side; that stretch reads LLIDPESPLGKTLMSWD. A helical membrane pass occupies residues 418-438; sequence HVSIALASANSCFNPFLYALL. The Cytoplasmic segment spans residues 439–482; the sequence is GKDFRKKARQSIQGILEAAFSEELTRSTHCNSNNVFSERNSTTV. A Phosphoserine modification is found at serine 459. Threonine 463 is modified (phosphothreonine).

Belongs to the G-protein coupled receptor 1 family. Interacts with VGF-derived peptide TLQP-21. Among the sulfation sites Tyr-174 is essential for binding of C3a anaphylatoxin.

The protein resides in the cell membrane. Functionally, receptor for the chemotactic and inflammatory peptide anaphylatoxin C3a. This receptor stimulates chemotaxis, granule enzyme release and superoxide anion production. This is C3a anaphylatoxin chemotactic receptor (C3AR1) from Pongo abelii (Sumatran orangutan).